The chain runs to 516 residues: Methionine--tRNA ligase (516 aa).

The 'HIGH' region motif lies at phenylalanine 13 to histidine 23. Positions lysine 299–serine 303 match the 'KMSKS' region motif. Position 302 (lysine 302) interacts with ATP.

The protein belongs to the class-I aminoacyl-tRNA synthetase family. MetG type 2B subfamily. In terms of assembly, monomer.

The protein resides in the cytoplasm. The catalysed reaction is tRNA(Met) + L-methionine + ATP = L-methionyl-tRNA(Met) + AMP + diphosphate. Is required not only for elongation of protein synthesis but also for the initiation of all mRNA translation through initiator tRNA(fMet) aminoacylation. This is Methionine--tRNA ligase from Mesorhizobium japonicum (strain LMG 29417 / CECT 9101 / MAFF 303099) (Mesorhizobium loti (strain MAFF 303099)).